The primary structure comprises 230 residues: Somatolactin (230 aa).

Positions 1–25 (MHTKVLQQGLWALLLWPHLFTVSVP) are cleaved as a signal peptide. Cystine bridges form between C28–C38, C88–C204, and C221–C229. N-linked (GlcNAc...) asparagine glycosylation is present at N144.

This sequence belongs to the somatotropin/prolactin family.

The protein resides in the secreted. In terms of biological role, selectively regulates proliferation and morphogenesis of neural-crest derived pigment cells. This Oryzias latipes (Japanese rice fish) protein is Somatolactin.